The sequence spans 50 residues: AEDCVGRKACTREWYPVCGSDGVTYSNPCNFSAQQEQCDPNITIAHMGEC.

The 49-residue stretch at 2–50 (EDCVGRKACTREWYPVCGSDGVTYSNPCNFSAQQEQCDPNITIAHMGEC) folds into the Kazal-like domain. Disulfide bonds link C10/C29 and C18/C50. 2 N-linked (GlcNAc...) asparagine glycosylation sites follow: N30 and N41.

Functionally, serine protease inhibitor. Strongly inhibits human neutrophil elastase and trypsin, also inhibits porcine pancreatic elastase and subtilisin A. Does not inhibit chymotrypsin, plasma kallikrein, pancreatic kallikrein, thrombin or papain. This is Protease inhibitor 2 from Cenchritis muricatus (Beaded periwinkle).